Here is a 172-residue protein sequence, read N- to C-terminus: Gamma-crystallin-4 (172 aa).

Beta/gamma crystallin 'Greek key' domains lie at 1–37 (IFFYEERNFQGRCYECSSECSDLSSYFNRCNSIRVES) and 38–80 (GNWI…RFIP). The segment at 81–85 (HPHSQ) is connecting peptide. Beta/gamma crystallin 'Greek key' domains are found at residues 86–126 (YKMR…NVSD) and 127–169 (GHWM…RRVH).

It belongs to the beta/gamma-crystallin family. As to quaternary structure, monomer.

In terms of biological role, crystallins are the dominant structural components of the vertebrate eye lens. This is Gamma-crystallin-4 (cryg4) from Xenopus laevis (African clawed frog).